A 615-amino-acid polypeptide reads, in one-letter code: Vitamin B12 transporter BtuB (615 aa).

Positions 1 to 20 (MIKKVSLMTALSVTAFSGWA) are cleaved as a signal peptide. The TonB box motif lies at 25–32 (DSLVVTAN). One can recognise a TBDR plug domain in the interval 37–151 (PANTVLAPTS…IGGVVNIITT (115 aa)). Cyanocob(III)alamin contacts are provided by residues serine 84, asparagine 91, and 109 to 110 (VT). The 462-residue stretch at 154–615 (KDGTTLNAGV…EYTLSGSYTF (462 aa)) folds into the TBDR beta-barrel domain. 3 beta stranded membrane passes run 157–164 (TTLNAGVG), 168–177 (YQNYGGSTQQ), and 183–194 (TRVTLAGDYTYT). Ca(2+) contacts are provided by aspartate 198, glutamine 210, aspartate 212, and aspartate 214. A run of 2 beta stranded transmembrane segments spans residues 216–226 (YMNKTIYGALE) and 231–247 (DQWS…NRTA). 2 residues coordinate Ca(2+): tyrosine 248 and aspartate 249. Cyanocob(III)alamin is bound at residue alanine 250. Residue aspartate 262 participates in Ca(2+) binding. 17 consecutive transmembrane segments (beta stranded) span residues 264-278 (RQLY…LRFN), 280-297 (GIFH…KDYN), 310-326 (TLDE…NSVD), 329-338 (HGNVGAGVDW), 354-370 (TNLR…QKFG), 372-382 (FTLEGAARSDD), 386-401 (FGRH…WEFI), 404-418 (YRFI…KAPN), 435-444 (ESKQWEGAFE), 450-459 (VSWRVSAYRN), 474-491 (YYNV…TASF), 495-510 (PLTH…ARNA), 518-530 (RRAK…QLDT), 536-551 (DWSL…YDTD), 559-573 (KVKM…LAVS), 586-597 (IANLFDKDYETV), and 603-615 (AGRE…SYTF). Threonine 310 is a binding site for cyanocob(III)alamin. Arginine 518 serves as a coordination point for cyanocob(III)alamin. Residues 598-615 (YGYETAGREYTLSGSYTF) carry the TonB C-terminal box motif.

Belongs to the TonB-dependent receptor family. BtuB (TC 1.B.14.3.1) subfamily.

Its subcellular location is the cell outer membrane. Its function is as follows. Involved in the active translocation of vitamin B12 (cyanocobalamin) across the outer membrane to the periplasmic space. It derives its energy for transport by interacting with the trans-periplasmic membrane protein TonB. The polypeptide is Vitamin B12 transporter BtuB (Enterobacter sp. (strain 638)).